Consider the following 445-residue polypeptide: Argininosuccinate synthase (445 aa).

Residues alanine 17–serine 25 and alanine 43 contribute to the ATP site. L-citrulline is bound at residue tyrosine 99. 2 residues coordinate ATP: glycine 129 and threonine 131. L-aspartate-binding residues include threonine 131, asparagine 135, and aspartate 136. Asparagine 135 contacts L-citrulline. Aspartate 136 contributes to the ATP binding site. Residues arginine 139 and serine 192 each coordinate L-citrulline. Aspartate 194 serves as a coordination point for ATP. L-citrulline contacts are provided by threonine 201, glutamate 203, and glutamate 280.

The protein belongs to the argininosuccinate synthase family. Type 2 subfamily. As to quaternary structure, homotetramer.

Its subcellular location is the cytoplasm. It catalyses the reaction L-citrulline + L-aspartate + ATP = 2-(N(omega)-L-arginino)succinate + AMP + diphosphate + H(+). It participates in amino-acid biosynthesis; L-arginine biosynthesis; L-arginine from L-ornithine and carbamoyl phosphate: step 2/3. The sequence is that of Argininosuccinate synthase from Afipia carboxidovorans (strain ATCC 49405 / DSM 1227 / KCTC 32145 / OM5) (Oligotropha carboxidovorans).